A 338-amino-acid polypeptide reads, in one-letter code: GTPase Obg (338 aa).

One can recognise an Obg domain in the interval 1–159 (MSFIDEVKIH…RWLRLELKLM (159 aa)). An OBG-type G domain is found at 160–331 (ADVGLLGMPS…LLDEIARNLW (172 aa)). GTP is bound by residues 166–173 (GMPSVGKS), 191–195 (FTTLK), 213–216 (DIPG), 283–286 (NKID), and 312–314 (SAA). Mg(2+)-binding residues include S173 and T193.

The protein belongs to the TRAFAC class OBG-HflX-like GTPase superfamily. OBG GTPase family. Monomer. Mg(2+) is required as a cofactor.

The protein localises to the cytoplasm. Its function is as follows. An essential GTPase which binds GTP, GDP and possibly (p)ppGpp with moderate affinity, with high nucleotide exchange rates and a fairly low GTP hydrolysis rate. Plays a role in control of the cell cycle, stress response, ribosome biogenesis and in those bacteria that undergo differentiation, in morphogenesis control. This is GTPase Obg from Geotalea uraniireducens (strain Rf4) (Geobacter uraniireducens).